The chain runs to 265 residues: Protein Msed_2121 (265 aa).

This sequence belongs to the CinA family.

The chain is Protein Msed_2121 from Metallosphaera sedula (strain ATCC 51363 / DSM 5348 / JCM 9185 / NBRC 15509 / TH2).